We begin with the raw amino-acid sequence, 430 residues long: Putative membrane fusion protein SilB (430 aa).

The N-terminal stretch at 1–28 is a signal peptide; that stretch reads MASLKIKYAAIIISSLIAGGLISVTAWQ. The interval 407–430 is disordered; it reads RHPEKTENSMPAMSEQPVNMHSGH. Residues 414–430 are compositionally biased toward polar residues; it reads NSMPAMSEQPVNMHSGH.

Belongs to the membrane fusion protein (MFP) (TC 8.A.1) family.

Its function is as follows. Component of the sil cation efflux system that confers resistance to silver. May be part of a three-component cation/proton antiporter. The sequence is that of Putative membrane fusion protein SilB (silB) from Salmonella typhimurium.